The sequence spans 514 residues: Protein Tube (514 aa).

Disordered stretches follow at residues 226-250 (VPQQ…RSSR), 255-274 (TASN…SNTA), 324-343 (LDAG…STST), 366-385 (ASDA…VPDM), and 413-514 (NGAK…ELQQ). Low complexity predominate over residues 259–274 (VAPTTASNAPSASNTA). Polar residues predominate over residues 422 to 433 (ADNNSSGTNSLS). The segment covering 434 to 460 (NDDDEQKEDDDDDDDDDVVDVDDEEAD) has biased composition (acidic residues). Positions 477–514 (TTVTCTSGENSFEFTNDSSSASNDDYTNNIPNLSELQQ) are enriched in polar residues.

In terms of tissue distribution, maternal and zygotic gene product.

It localises to the cytoplasm. Functionally, required for the determination of embryonic dorsoventral polarity. Is involved in transduction of information regulating nuclear import of dorsal protein. The protein is Protein Tube (tub) of Drosophila virilis (Fruit fly).